Here is a 1434-residue protein sequence, read N- to C-terminus: Probable ATP-dependent DNA helicase HFM1 (1434 aa).

In terms of domain architecture, Helicase ATP-binding spans 289–476 (DDLLYTDRNF…WLSDGERPAV (188 aa)). Position 302–309 (302–309 (APTGSGKT)) interacts with ATP. Residues 410-413 (DEVH) carry the DEAH box motif. In terms of domain architecture, Helicase C-terminal spans 514 to 718 (KVYSVIRTYS…DVNIALDWIR (205 aa)). An SEC63 domain is found at 775–1089 (PTEAGRLMAW…VGLDIHQKFT (315 aa)). Positions 1110–1130 (TDISHSDYSGRATATGSSKGM) are disordered. A C4-type zinc finger spans residues 1141-1156 (CHHHCKNKHACGHDCC). Residues 1294 to 1333 (GFGDTRDSSLGGSKLPFQKSSSRFQRDNSNSFASSPGKPD) form a disordered region. Residues 1311-1327 (QKSSSRFQRDNSNSFAS) show a composition bias toward polar residues.

Belongs to the helicase family. SKI2 subfamily. Requires Zn(2+) as cofactor.

It carries out the reaction Couples ATP hydrolysis with the unwinding of duplex DNA by translocating in the 3'-5' direction.. It catalyses the reaction ATP + H2O = ADP + phosphate + H(+). Its function is as follows. Required for crossover formation and complete synapsis of homologous chromosomes during meiosis. This Mus musculus (Mouse) protein is Probable ATP-dependent DNA helicase HFM1.